A 429-amino-acid chain; its full sequence is Ribosomal RNA small subunit methyltransferase B (429 aa).

Residues 254-260 (CAAPGGK), aspartate 277, aspartate 303, and aspartate 322 contribute to the S-adenosyl-L-methionine site. The Nucleophile role is filled by cysteine 375.

This sequence belongs to the class I-like SAM-binding methyltransferase superfamily. RsmB/NOP family.

It localises to the cytoplasm. It carries out the reaction cytidine(967) in 16S rRNA + S-adenosyl-L-methionine = 5-methylcytidine(967) in 16S rRNA + S-adenosyl-L-homocysteine + H(+). Functionally, specifically methylates the cytosine at position 967 (m5C967) of 16S rRNA. This Erwinia tasmaniensis (strain DSM 17950 / CFBP 7177 / CIP 109463 / NCPPB 4357 / Et1/99) protein is Ribosomal RNA small subunit methyltransferase B.